The sequence spans 302 residues: Short-chain dehydrogenase/reductase 1 (302 aa).

NADP(+) is bound by residues 20-23 (NKGL), arginine 43, 71-72 (DV), and asparagine 98. Position 170 (serine 170) interacts with substrate. NADP(+) contacts are provided by residues tyrosine 226, lysine 230, and 257–262 (VKTDIN). Residue tyrosine 226 is the Proton acceptor of the active site.

It belongs to the short-chain dehydrogenases/reductases (SDR) family. Mainly expressed in flowers and flower buds, to a lesser extent in leaves and, at low levels, in stems and roots.

Its pathway is secondary metabolite biosynthesis; terpenoid biosynthesis. Functionally, component of the oleanane-type triterpene saponins (e.g. saponarioside A and saponarioside B) biosynthetic pathway, leading to the production of natural products with detergent properties used as traditional sources of soap. A dehydrogenase/reductase that, together with UGT74CD1, mediates the conversion of QA-tri to QA-triF; UGT74CD1 may transfer 4-keto-6-deoxy-glucose to QA-tri, which is in turn reduced to D-fucose by SDR1, thus leading to QA-triF formation via the initiation of the C-28 sugar chain. This Saponaria officinalis (Common soapwort) protein is Short-chain dehydrogenase/reductase 1.